Consider the following 360-residue polypeptide: Photosystem II protein D1 (360 aa).

A run of 3 helical transmembrane segments spans residues 29-46 (YIGWFGVLMIPTLVSAIA), 118-133 (HFLIGVACYLGREWEL), and 142-156 (WICVAFSAPVAAATA). H118 serves as a coordination point for chlorophyll a. Position 126 (Y126) interacts with pheophytin a. [CaMn4O5] cluster is bound by residues D170 and E189. The helical transmembrane segment at 197–218 (FHMLGVAGVFGGSLFSAMHGSL) threads the bilayer. Position 198 (H198) interacts with chlorophyll a. Residues H215 and 264–265 (SF) each bind a quinone. Residue H215 participates in Fe cation binding. H272 provides a ligand contact to Fe cation. Residues 274–288 (FLAAWPVIGIWFTAL) form a helical membrane-spanning segment. [CaMn4O5] cluster is bound by residues H332, E333, D342, and A344. Residues 345–360 (AGDVAPVALTAPPING) constitute a propeptide that is removed on maturation.

This sequence belongs to the reaction center PufL/M/PsbA/D family. PSII is composed of 1 copy each of membrane proteins PsbA, PsbB, PsbC, PsbD, PsbE, PsbF, PsbH, PsbI, PsbJ, PsbK, PsbL, PsbM, PsbT, PsbX, PsbY, PsbZ, Psb30/Ycf12, peripheral proteins PsbO, CyanoQ (PsbQ), PsbU, PsbV and a large number of cofactors. It forms dimeric complexes. The D1/D2 heterodimer binds P680, chlorophylls that are the primary electron donor of PSII, and subsequent electron acceptors. It shares a non-heme iron and each subunit binds pheophytin, quinone, additional chlorophylls, carotenoids and lipids. D1 provides most of the ligands for the Mn4-Ca-O5 cluster of the oxygen-evolving complex (OEC). There is also a Cl(-1) ion associated with D1 and D2, which is required for oxygen evolution. The PSII complex binds additional chlorophylls, carotenoids and specific lipids. is required as a cofactor. Tyr-161 forms a radical intermediate that is referred to as redox-active TyrZ, YZ or Y-Z. Post-translationally, C-terminally processed by CtpA; processing is essential to allow assembly of the oxygen-evolving complex and thus photosynthetic growth.

Its subcellular location is the cellular thylakoid membrane. It catalyses the reaction 2 a plastoquinone + 4 hnu + 2 H2O = 2 a plastoquinol + O2. Functionally, photosystem II (PSII) is a light-driven water:plastoquinone oxidoreductase that uses light energy to abstract electrons from H(2)O, generating O(2) and a proton gradient subsequently used for ATP formation. It consists of a core antenna complex that captures photons, and an electron transfer chain that converts photonic excitation into a charge separation. The D1/D2 (PsbA/PsbD) reaction center heterodimer binds P680, the primary electron donor of PSII as well as several subsequent electron acceptors. The sequence is that of Photosystem II protein D1 from Trichormus azollae (Anabaena azollae).